Consider the following 325-residue polypeptide: Isoaspartyl peptidase/L-asparaginase (325 aa).

The active-site Nucleophile is Thr193. Residues 221–224 (RIGD) and 243–246 (TGKG) contribute to the substrate site.

It belongs to the Ntn-hydrolase family. In terms of assembly, heterotetramer of two alpha and two beta chains arranged as a dimer of alpha/beta heterodimers. Cleaved into an alpha and beta chain by autocatalysis; this activates the enzyme. The N-terminal residue of the beta subunit is responsible for the nucleophile hydrolase activity. As to expression, developing seeds.

It carries out the reaction Cleavage of a beta-linked Asp residue from the N-terminus of a polypeptide.. Its function is as follows. Acts in asparagine catabolism but also in the final steps of protein degradation via hydrolysis of a range of isoaspartyl dipeptides. This chain is Isoaspartyl peptidase/L-asparaginase, found in Lupinus angustifolius (Narrow-leaved blue lupine).